Consider the following 221-residue polypeptide: Large ribosomal subunit protein uL3 (221 aa).

The protein belongs to the universal ribosomal protein uL3 family. In terms of assembly, part of the 50S ribosomal subunit. Forms a cluster with proteins L14 and L19.

Functionally, one of the primary rRNA binding proteins, it binds directly near the 3'-end of the 23S rRNA, where it nucleates assembly of the 50S subunit. In Chlamydia abortus (strain DSM 27085 / S26/3) (Chlamydophila abortus), this protein is Large ribosomal subunit protein uL3.